Reading from the N-terminus, the 180-residue chain is Pro-glucagon (180 aa).

A signal peptide spans 1-20 (MKTIYFVAGLFVMLVQGSWQ). The interval 25–59 (NTEEKSRSFPAPQTDPLDDPDQMTEDKRHSQGTFT) is disordered. Phosphoserine is present on S54. Residues 84 to 89 (NKNNIA) constitute a propeptide that is removed on maturation. A phosphoserine mark is found at S105 and S108. Arginine amide is present on R127. A propeptide spanning residues 131–145 (DFPEEVTIVEELRRR) is cleaved from the precursor. Residues S150 and S152 each carry the phosphoserine modification.

It belongs to the glucagon family. In terms of processing, proglucagon is post-translationally processed in a tissue-specific manner in pancreatic A cells and intestinal L cells. In pancreatic A cells, the major bioactive hormone is glucagon cleaved by PCSK2/PC2. In the intestinal L cells PCSK1/PC1 liberates GLP-1, GLP-2, glicentin and oxyntomodulin. GLP-1 is further N-terminally truncated by post-translational processing in the intestinal L cells resulting in GLP-1(7-37) GLP-1-(7-36)amide. The C-terminal amidation is neither important for the metabolism of GLP-1 nor for its effects on the endocrine pancreas. In terms of tissue distribution, glucagon is secreted in the A cells of the islets of Langerhans. GLP-1, GLP-2, oxyntomodulin and glicentin are secreted from enteroendocrine cells throughout the gastrointestinal tract. GLP-1 and GLP-2 are also secreted in selected neurons in the brain.

Its subcellular location is the secreted. In terms of biological role, plays a key role in glucose metabolism and homeostasis. Regulates blood glucose by increasing gluconeogenesis and decreasing glycolysis. A counterregulatory hormone of insulin, raises plasma glucose levels in response to insulin-induced hypoglycemia. Plays an important role in initiating and maintaining hyperglycemic conditions in diabetes. Functionally, potent stimulator of glucose-dependent insulin release. Also stimulates insulin release in response to IL6. Plays important roles on gastric motility and the suppression of plasma glucagon levels. May be involved in the suppression of satiety and stimulation of glucose disposal in peripheral tissues, independent of the actions of insulin. Has growth-promoting activities on intestinal epithelium. May also regulate the hypothalamic pituitary axis (HPA) via effects on LH, TSH, CRH, oxytocin, and vasopressin secretion. Increases islet mass through stimulation of islet neogenesis and pancreatic beta cell proliferation. Inhibits beta cell apoptosis. Its function is as follows. Stimulates intestinal growth and up-regulates villus height in the small intestine, concomitant with increased crypt cell proliferation and decreased enterocyte apoptosis. The gastrointestinal tract, from the stomach to the colon is the principal target for GLP-2 action. Plays a key role in nutrient homeostasis, enhancing nutrient assimilation through enhanced gastrointestinal function, as well as increasing nutrient disposal. Stimulates intestinal glucose transport and decreases mucosal permeability. Significantly reduces food intake. Inhibits gastric emptying in humans. Suppression of gastric emptying may lead to increased gastric distension, which may contribute to satiety by causing a sensation of fullness. In terms of biological role, may modulate gastric acid secretion and the gastro-pyloro-duodenal activity. May play an important role in intestinal mucosal growth in the early period of life. This chain is Pro-glucagon (GCG), found in Sus scrofa (Pig).